A 467-amino-acid chain; its full sequence is MSQEINQKSQEVRVRFAPSPTGYLHVGGARTALFNWLFARKNNGKFVLRIEDTDTERSTRESEQMIMNDLKWLGLYWDEGPDIGGNYGPYRQSERLEIYKKYAYELVEKGYAYFAIYDENDPKKVIEKTTKEPKTKNPFTVVFKVPENKVIAFDDMLKGRIEFSTEHMEDFIILKSNGYSVYNYAVVIDDHFMNITHVLRGEDHISNTPKQLLLYEAFGWEQPKFMHIPLILGADKTPLSKRHGATAVEHFRKEGYLPKALVNYLAILGWSVDEEIFDYTQKVQSFMPEQISNKNVVFDYQKLEWVNGKHMRTLSLDELMKYFKEWQEFTEKKFEIPEKVIEISREKVNTLKQLYEFTLPFVDDNYEYSNDYIEKFLKKPEAIHILELGMKKFSDLNDYTIENVEKVLREIAIELNLGTNKVFQTIRGAVLGRLVTPGLFESIAVLGKEKTLSRIRRTIGMISTIGG.

Positions Pro-18 to Gly-28 match the 'HIGH' region motif. The 'KMSKS' region motif lies at Pro-238–Arg-242. Residue Lys-241 coordinates ATP.

Belongs to the class-I aminoacyl-tRNA synthetase family. Glutamate--tRNA ligase type 1 subfamily. As to quaternary structure, monomer.

Its subcellular location is the cytoplasm. It catalyses the reaction tRNA(Glu) + L-glutamate + ATP = L-glutamyl-tRNA(Glu) + AMP + diphosphate. Catalyzes the attachment of glutamate to tRNA(Glu) in a two-step reaction: glutamate is first activated by ATP to form Glu-AMP and then transferred to the acceptor end of tRNA(Glu). The chain is Glutamate--tRNA ligase 2 from Fervidobacterium nodosum (strain ATCC 35602 / DSM 5306 / Rt17-B1).